The primary structure comprises 214 residues: NAD(P)H-quinone oxidoreductase subunit 5, chloroplastic (214 aa).

The next 2 membrane-spanning stretches (helical) occupy residues 84–104 and 152–172; these read LFPL…GIPF and SLAI…YSFF.

The protein belongs to the complex I subunit 5 family. NDH is composed of at least 16 different subunits, 5 of which are encoded in the nucleus.

The protein localises to the plastid. It is found in the chloroplast thylakoid membrane. The catalysed reaction is a plastoquinone + NADH + (n+1) H(+)(in) = a plastoquinol + NAD(+) + n H(+)(out). It carries out the reaction a plastoquinone + NADPH + (n+1) H(+)(in) = a plastoquinol + NADP(+) + n H(+)(out). In terms of biological role, NDH shuttles electrons from NAD(P)H:plastoquinone, via FMN and iron-sulfur (Fe-S) centers, to quinones in the photosynthetic chain and possibly in a chloroplast respiratory chain. The immediate electron acceptor for the enzyme in this species is believed to be plastoquinone. Couples the redox reaction to proton translocation, and thus conserves the redox energy in a proton gradient. In Brachypodium sylvaticum (False brome), this protein is NAD(P)H-quinone oxidoreductase subunit 5, chloroplastic (ndhF).